Reading from the N-terminus, the 406-residue chain is Phosphopentomutase (406 aa).

Positions 10, 305, 310, 346, 347, and 358 each coordinate Mn(2+).

Belongs to the phosphopentomutase family. Mn(2+) is required as a cofactor.

It is found in the cytoplasm. It carries out the reaction 2-deoxy-alpha-D-ribose 1-phosphate = 2-deoxy-D-ribose 5-phosphate. It catalyses the reaction alpha-D-ribose 1-phosphate = D-ribose 5-phosphate. The protein operates within carbohydrate degradation; 2-deoxy-D-ribose 1-phosphate degradation; D-glyceraldehyde 3-phosphate and acetaldehyde from 2-deoxy-alpha-D-ribose 1-phosphate: step 1/2. Its function is as follows. Isomerase that catalyzes the conversion of deoxy-ribose 1-phosphate (dRib-1-P) and ribose 1-phosphate (Rib-1-P) to deoxy-ribose 5-phosphate (dRib-5-P) and ribose 5-phosphate (Rib-5-P), respectively. This chain is Phosphopentomutase, found in Allorhizobium ampelinum (strain ATCC BAA-846 / DSM 112012 / S4) (Agrobacterium vitis (strain S4)).